The sequence spans 203 residues: Probable nicotinate-nucleotide adenylyltransferase (203 aa).

Belongs to the NadD family.

The catalysed reaction is nicotinate beta-D-ribonucleotide + ATP + H(+) = deamido-NAD(+) + diphosphate. The protein operates within cofactor biosynthesis; NAD(+) biosynthesis; deamido-NAD(+) from nicotinate D-ribonucleotide: step 1/1. Catalyzes the reversible adenylation of nicotinate mononucleotide (NaMN) to nicotinic acid adenine dinucleotide (NaAD). The polypeptide is Probable nicotinate-nucleotide adenylyltransferase (Dictyoglomus turgidum (strain DSM 6724 / Z-1310)).